The sequence spans 418 residues: Tol-Pal system protein TolB (418 aa).

The N-terminal stretch at 1 to 21 (MKLFVQLVLFISLFIPYSTKA) is a signal peptide.

Belongs to the TolB family. The Tol-Pal system is composed of five core proteins: the inner membrane proteins TolA, TolQ and TolR, the periplasmic protein TolB and the outer membrane protein Pal. They form a network linking the inner and outer membranes and the peptidoglycan layer.

The protein resides in the periplasm. In terms of biological role, part of the Tol-Pal system, which plays a role in outer membrane invagination during cell division and is important for maintaining outer membrane integrity. In Wolbachia pipientis subsp. Culex pipiens (strain wPip), this protein is Tol-Pal system protein TolB.